Reading from the N-terminus, the 567-residue chain is Interleukin-1 receptor-like 1 (567 aa).

The signal sequence occupies residues 1-26 (MIDRQRMGLWALAILTLPMYLTVTEG). 2 consecutive Ig-like C2-type domains span residues 27 to 109 (SKSS…LNVT) and 120 to 203 (PDYL…VTAT). At 27 to 332 (SKSSWGLENE…LRRKQPIDHR (306 aa)) the chain is on the extracellular side. Cysteines 42 and 93 form a disulfide. N-linked (GlcNAc...) asparagine glycans are attached at residues N60, N101, N107, N146, N176, and N194. Cystine bridges form between C117-C157 and C139-C187. The tract at residues 204–216 (RSFTVEEKGFSMF) is flexible linker. The Ig-like C2-type 3 domain occupies 217-324 (PVITNPPYNH…GMIRHTIRLR (108 aa)). N-linked (GlcNAc...) asparagine glycosylation is found at N225, N259, and N278. Disulfide bonds link C240-C308 and C243-C287. Residue K326 forms a Glycyl lysine isopeptide (Lys-Gly) (interchain with G-Cter in ubiquitin) linkage. A helical transmembrane segment spans residues 333-355 (SIYYIVAGCSLLLMFINVLVIVL). At 356–567 (KVFWIEVALF…GKACLDLKHF (212 aa)) the chain is on the cytoplasmic side. In terms of domain architecture, TIR spans 380–540 (KLYDAYIIYP…KFWKHVRYQM (161 aa)). A Phosphoserine; by GSK3-beta modification is found at S442. E466 is a catalytic residue.

This sequence belongs to the interleukin-1 receptor family. As to quaternary structure, interacts with MYD88, IRAK1, IRAK4, and TRAF6. Bound to its ligand IL33, interacts with IL1RAP to form the minimal interleukin-33 signaling complex with a 1:1:1 stoichiometry. Interacts with KIT (bound to KITLG/SCF). A mast cell-specific KITLG/SCF-induced interleukin-33 signaling complex contains IL1RL1, IL1RAP, KIT and MYD88. Interacts with TMED1. Post-translationally, phosphorylated by GSK3B at Ser-442; leading to proteasomal degradation. Ubiquitinated at Lys-326 in a FBXL19-mediated manner; leading to proteasomal degradation. Ubiquitination by TRAF6 via 'Lys-27'-linked polyubiquitination and deubiquitination by USP38 serves as a critical regulatory mechanism for fine-tuning IL1RL1-mediated inflammatory response. As to expression, predominantly expressed in hematopoietic tissues, and in macrophage, erythroid, epithelial and fibroblast cell lines. Isoform A is expressed in brain astrocytes and microglia. Isoform B is expressed in brain endothelial cells.

The protein resides in the cell membrane. It localises to the secreted. It carries out the reaction NAD(+) + H2O = ADP-D-ribose + nicotinamide + H(+). Receptor for interleukin-33 (IL-33) which plays crucial roles in innate and adaptive immunity, contributing to tissue homeostasis and responses to environmental stresses together with coreceptor IL1RAP. Its stimulation recruits MYD88, IRAK1, IRAK4, and TRAF6, followed by phosphorylation of MAPK3/ERK1 and/or MAPK1/ERK2, MAPK14, and MAPK8. Possibly involved in helper T-cell function. Upon tissue injury, induces UCP2-dependent mitochondrial rewiring that attenuates the generation of reactive oxygen species and preserves the integrity of Krebs cycle required for persistent production of itaconate and subsequent GATA3-dependent differentiation of inflammation-resolving alternatively activated macrophages. In terms of biological role, inhibits IL-33 signaling. This is Interleukin-1 receptor-like 1 (Il1rl1) from Mus musculus (Mouse).